We begin with the raw amino-acid sequence, 147 residues long: SsrA-binding protein (147 aa).

The protein belongs to the SmpB family.

It localises to the cytoplasm. Its function is as follows. Required for rescue of stalled ribosomes mediated by trans-translation. Binds to transfer-messenger RNA (tmRNA), required for stable association of tmRNA with ribosomes. tmRNA and SmpB together mimic tRNA shape, replacing the anticodon stem-loop with SmpB. tmRNA is encoded by the ssrA gene; the 2 termini fold to resemble tRNA(Ala) and it encodes a 'tag peptide', a short internal open reading frame. During trans-translation Ala-aminoacylated tmRNA acts like a tRNA, entering the A-site of stalled ribosomes, displacing the stalled mRNA. The ribosome then switches to translate the ORF on the tmRNA; the nascent peptide is terminated with the 'tag peptide' encoded by the tmRNA and targeted for degradation. The ribosome is freed to recommence translation, which seems to be the essential function of trans-translation. The polypeptide is SsrA-binding protein (Mycoplasma pneumoniae (strain ATCC 29342 / M129 / Subtype 1) (Mycoplasmoides pneumoniae)).